Here is a 185-residue protein sequence, read N- to C-terminus: Elongation factor P (185 aa).

The protein belongs to the elongation factor P family.

The protein localises to the cytoplasm. The protein operates within protein biosynthesis; polypeptide chain elongation. Involved in peptide bond synthesis. Stimulates efficient translation and peptide-bond synthesis on native or reconstituted 70S ribosomes in vitro. Probably functions indirectly by altering the affinity of the ribosome for aminoacyl-tRNA, thus increasing their reactivity as acceptors for peptidyl transferase. The chain is Elongation factor P from Bacillus cytotoxicus (strain DSM 22905 / CIP 110041 / 391-98 / NVH 391-98).